Reading from the N-terminus, the 507-residue chain is Histidine ammonia-lyase (507 aa).

The segment at residues 143-145 (ASG) is a cross-link (5-imidazolinone (Ala-Gly)). Ser144 is subject to 2,3-didehydroalanine (Ser).

Belongs to the PAL/histidase family. Post-translationally, contains an active site 4-methylidene-imidazol-5-one (MIO), which is formed autocatalytically by cyclization and dehydration of residues Ala-Ser-Gly.

Its subcellular location is the cytoplasm. The enzyme catalyses L-histidine = trans-urocanate + NH4(+). It functions in the pathway amino-acid degradation; L-histidine degradation into L-glutamate; N-formimidoyl-L-glutamate from L-histidine: step 1/3. The polypeptide is Histidine ammonia-lyase (Alkaliphilus oremlandii (strain OhILAs) (Clostridium oremlandii (strain OhILAs))).